We begin with the raw amino-acid sequence, 2348 residues long: Transcription factor HIVEP3 (2348 aa).

Residues 1 to 105 (MDPDQSIKGT…AFMSPGKPEH (105 aa)) form a disordered region. The span at 27 to 72 (IQTSVSSSAPYPGSGTTAPSESATQELLATQPFSGPSQEKTGQQQK) shows a compositional bias: polar residues. C2H2-type zinc fingers lie at residues 185–207 (YICQYCSRPCAKPSVLQKHIRSH) and 213–235 (YPCGPCGFSFKTKSNLYKHRKSH). Positions 185–235 (YICQYCSRPCAKPSVLQKHIRSHTGERPYPCGPCGFSFKTKSNLYKHRKSH) are ZAS1. The no DNA binding activity or transactivation activity, but complete prevention of TRAF-dependent NF-Kappa-B activation; associates with TRAF2 and JUN stretch occupies residues 204-1055 (IRSHTGERPY…KGKQESSEEP (852 aa)). Disordered stretches follow at residues 239–401 (IKAG…SPPN), 475–532 (DSVK…PLLR), and 561–628 (ADPE…TKKG). Residues 257 to 280 (EMERIPGEEFEEPTEGESTDSEEE) are acidic 1. Acidic residues predominate over residues 264 to 281 (EEFEEPTEGESTDSEEET). Over residues 298 to 323 (PLLSSSLYSSGSHGSSQERCSLSQSS) the composition is skewed to low complexity. The segment covering 338 to 352 (SSEHPLSHKPEDTHT) has biased composition (basic and acidic residues). Polar residues-rich tracts occupy residues 372-401 (TFLSPGSKGSTESGYFSRSESAEQQVSPPN) and 485-495 (TRRSSVESPKS). Composition is skewed to low complexity over residues 513–527 (QSLLSLQHPPSSTHP) and 589–605 (PLGGEYSSEEPGPSSKD). Over residues 606-623 (PTSKPSDEPEPKESDLTK) the composition is skewed to basic and acidic residues. The segment at 633 to 663 (GANYECTICGARYKKRDNYEAHKKYYCSELQ) adopts a CCHC HIVEP-type zinc-finger fold. Disordered stretches follow at residues 692–1098 (KLGA…PPYT), 1229–1274 (LPPV…TSAP), 1386–1427 (EGCS…KADE), 1441–1555 (STED…EGTD), and 1654–1694 (EVHL…GEPA). Residues 736 to 749 (STKSPAEASKSAPS) are compositionally biased toward low complexity. The interval 844–865 (EEPDRPDTEPEPPPKEPEKTEE) is acidic 2. The segment covering 845 to 865 (EPDRPDTEPEPPPKEPEKTEE) has biased composition (basic and acidic residues). Positions 885–891 (PKKKRLR) match the Nuclear localization signal motif. Residues 893–929 (AEMAQSSGESSFESSVPLSRSPSQESSISLSGSSRSA) are compositionally biased toward low complexity. Over residues 930-939 (SFDREDHGKA) the composition is skewed to basic and acidic residues. Composition is skewed to polar residues over residues 975 to 985 (SEQSPNVPHSS), 1062 to 1073 (TKSSVPQISVGT), and 1247 to 1256 (SSSTEYSSDI). Residues 1409-1433 (METQQQKRVKEEEASKADEKLELVS) adopt a coiled-coil conformation. Composition is skewed to basic and acidic residues over residues 1416 to 1427 (RVKEEEASKADE), 1442 to 1452 (TEDRKKTEKPH), and 1518 to 1527 (VKKEDPKEQT). Over residues 1538 to 1547 (LPLSDTSPKP) the composition is skewed to low complexity. Residues 1665–1694 (SQKDPARVEKEEKQGKAEEGTPTSKRGEPA) show a composition bias toward basic and acidic residues. 2 consecutive C2H2-type zinc fingers follow at residues 1720-1742 (YVCEECGIRCKKPSMLKKHIRTH) and 1748-1772 (YVCKHCHFAFKTKGNLTKHMKSKAH). Positions 1720 to 1772 (YVCEECGIRCKKPSMLKKHIRTHTDVRPYVCKHCHFAFKTKGNLTKHMKSKAH) are ZAS2. An acidic 3 region spans residues 1783–1841 (EELEAEEGTSDDLHQDSEGQEGAEAVEEHQFSDLEDSDSDSDLDEDEEEEEEEEESQDE). Disordered regions lie at residues 1786 to 1990 (EAEE…HLCG) and 2009 to 2038 (PAGLERATDTGTPRYSPTRRWSLGQAESPP). The segment covering 1815–1840 (DLEDSDSDSDLDEDEEEEEEEEESQD) has biased composition (acidic residues). The span at 1871–1902 (PDSTSDEVPQGSSISEATHLTASSCSTPSRGT) shows a compositional bias: polar residues. 5 repeat units span residues 1897 to 1900 (TPSR), 1927 to 1930 (SPRR), 1933 to 1936 (SPSK), 1961 to 1964 (SPAR), and 2024 to 2027 (SPTR). Polar residues predominate over residues 1952 to 1961 (KNDSSPQQCS). The tract at residues 2053-2148 (SPSADKSGLG…QLLSRAPCPL (96 aa)) is 5 X 4 AA tandem repeats of [ST]-P-X-[RK]. Disordered stretches follow at residues 2184–2265 (SDLT…QGHQ) and 2284–2348 (KASS…PPSI). The span at 2203 to 2216 (SPSASVSPVAKVSK) shows a compositional bias: low complexity. Residues 2293-2314 (RSSSMDCLAETSTYSPPRSRNL) show a composition bias toward polar residues.

Interacts with TRAF1 and TRAF2 as well as with JUN. Forms a multimeric complex with RUNX2 and E3 ubiquitin ligase WWP1. In terms of processing, phosphorylated on threonine and serine residues. Phosphorylation by cyclin-dependent kinase CDK1 decreases HIVEP3 DNA binding affinity, and by epidermal growth factor receptor kinase increases its DNA binding affinity. In terms of tissue distribution, expressed in macrophages, lymphocytes, brain, thymus, spleen and bone marrow. Expressed in osteoblasts, whole bone and, to a lesser extent, in osteoclasts.

Its subcellular location is the cytoplasm. The protein resides in the nucleus. Functionally, plays a role of transcription factor; binds to recognition signal sequences (Rss heptamer) for somatic recombination of immunoglobulin and T-cell receptor gene segments; Also binds to the kappa-B motif of gene such as S100A4, involved in cell progression and differentiation. Kappa-B motif is a gene regulatory element found in promoters and enhancers of genes involved in immunity, inflammation, and growth and that responds to viral antigens, mitogens, and cytokines. Involvement of HIVEP3 in cell growth is strengthened by the fact that its down-regulation promotes cell cycle progression with ultimate formation of multinucleated giant cells. Strongly inhibits TNF-alpha-induced NF-kappa-B activation; Interferes with nuclear factor NF-kappa-B by several mechanisms: as transcription factor, by competing for Kappa-B motif and by repressing transcription in the nucleus; through a non transcriptional process, by inhibiting nuclear translocation of RELA by association with TRAF2, an adapter molecule in the tumor necrosis factor signaling, which blocks the formation of IKK complex. Interaction with TRAF proteins inhibits both NF-Kappa-B-mediated and c-Jun N-terminal kinase/JNK-mediated responses that include apoptosis and pro-inflammatory cytokine gene expression. Positively regulates the expression of IL2 in T-cell. Essential regulator of adult bone formation. The polypeptide is Transcription factor HIVEP3 (Hivep3) (Mus musculus (Mouse)).